A 258-amino-acid chain; its full sequence is Acetylglutamate kinase (258 aa).

Residues 44–45, arginine 66, and asparagine 158 contribute to the substrate site; that span reads GG. ATP is bound by residues 181–186 and 209–211; these read DVSGIL and IIT.

Belongs to the acetylglutamate kinase family. ArgB subfamily. Homodimer.

The protein localises to the cytoplasm. The enzyme catalyses N-acetyl-L-glutamate + ATP = N-acetyl-L-glutamyl 5-phosphate + ADP. It participates in amino-acid biosynthesis; L-arginine biosynthesis; N(2)-acetyl-L-ornithine from L-glutamate: step 2/4. Its function is as follows. Catalyzes the ATP-dependent phosphorylation of N-acetyl-L-glutamate. The protein is Acetylglutamate kinase of Citrobacter koseri (strain ATCC BAA-895 / CDC 4225-83 / SGSC4696).